We begin with the raw amino-acid sequence, 86 residues long: MeuNaTxbeta-1 (86 aa).

The first 20 residues, 1–20 (MMKIIIFLIVSSLVLIGVKT), serve as a signal peptide directing secretion. Positions 21–83 (DNGYLLDKYT…LWHYETNKCN (63 aa)) constitute an LCN-type CS-alpha/beta domain. 4 disulfide bridges follow: Cys-32/Cys-82, Cys-36/Cys-57, Cys-43/Cys-64, and Cys-47/Cys-66.

Expressed by the venom gland.

It localises to the secreted. In terms of biological role, inhibits sodium channels (Nav). Also moderately inhibits human calcium-activated potassium channel KCa1.1/KCNMA1/BK (41.9% decrease at 2 uM toxin concentration). Shows moderate antimicrobial activity against both Gram-positive and -negative bacteria. The sequence is that of MeuNaTxbeta-1 from Mesobuthus eupeus (Lesser Asian scorpion).